We begin with the raw amino-acid sequence, 414 residues long: Ferredoxin--NAD(P)(+) reductase fdr (414 aa).

7-38 is a binding site for FAD; the sequence is DVVIVGAGHGGAQTAIALRQNGFAGTIAIIGA. 149-177 lines the NAD(+) pocket; sequence KVVIIGGGYIGLEAAAVMAKFGKNVTLIE.

The protein belongs to the FAD-dependent oxidoreductase family. As to quaternary structure, monomer. Carbazole 1,9a-dioxygenase complex consists of a terminal oxygenase component CarAa, a ferredoxin reductase component fdr and a ferredoxin component CarAc. FAD serves as cofactor.

It catalyses the reaction 2 reduced [2Fe-2S]-[ferredoxin] + NAD(+) + H(+) = 2 oxidized [2Fe-2S]-[ferredoxin] + NADH. The catalysed reaction is 2 reduced [2Fe-2S]-[ferredoxin] + NADP(+) + H(+) = 2 oxidized [2Fe-2S]-[ferredoxin] + NADPH. In terms of biological role, part of the multicomponent carbazole 1,9a-dioxygenase (CARDO), that converts carbazole (CAR) into 2-aminobiphenyl-2,3-diol. This Sphingomonas sp protein is Ferredoxin--NAD(P)(+) reductase fdr (fdr).